The following is a 243-amino-acid chain: MSGHSKWHNIQGRKNAQDSKRGKIFQKLSRELYMAAKQGGPDPSGNPSLRLVMDKAKAANMPKDNIKRALDKASDRDAANYDEVTYEGYGPGGVAILVEALTDNRNRTSSTVRVAITRHGGNMAAAGAVSYMFDRKGYLVISRDDLDVDEDQMLEDALEAGAEDMQTSDEAFEIYTDPKEFAQVRDALEEKGYKFVQNELTMVPQNLTPIPEDKVEQFQAMIDQLEDDDDVQEVYTAGDWPDD.

Residues 1–23 (MSGHSKWHNIQGRKNAQDSKRGK) are disordered.

This sequence belongs to the TACO1 family.

It localises to the cytoplasm. This Lacticaseibacillus casei (strain BL23) (Lactobacillus casei) protein is Probable transcriptional regulatory protein LCABL_11860.